Here is a 102-residue protein sequence, read N- to C-terminus: MSLRDLKEENRIVIWPSYFFSPTRSKGRRLARIPYKIKTEELVSTLRELGLDPIVIENKKYPRDRKINFLIAVKKVKSKNYTLKIIHNALMGTRQTNPNKSN.

This sequence belongs to the SRP19 family. Part of the signal recognition particle protein translocation system, which is composed of SRP and FtsY. Archaeal SRP consists of a 7S RNA molecule of 300 nucleotides and two protein subunits: SRP54 and SRP19.

The protein localises to the cytoplasm. Functionally, involved in targeting and insertion of nascent membrane proteins into the cytoplasmic membrane. Binds directly to 7S RNA and mediates binding of the 54 kDa subunit of the SRP. This is Signal recognition particle 19 kDa protein from Saccharolobus solfataricus (strain ATCC 35092 / DSM 1617 / JCM 11322 / P2) (Sulfolobus solfataricus).